Here is a 357-residue protein sequence, read N- to C-terminus: Isopentenyl-diphosphate delta-isomerase (357 aa).

6 to 7 contacts substrate; that stretch reads RK. FMN is bound by residues Ser62, 63–65, Ser93, and Asn122; that span reads AMT. 93 to 95 is a substrate binding site; the sequence is SQR. Gln156 lines the substrate pocket. Glu157 provides a ligand contact to Mg(2+). FMN contacts are provided by residues Lys186, Thr216, 267 to 269, and 288 to 289; these read GVR and AL.

Belongs to the IPP isomerase type 2 family. As to quaternary structure, homooctamer. Dimer of tetramers. FMN serves as cofactor. Requires NADPH as cofactor. Mg(2+) is required as a cofactor.

It localises to the cytoplasm. The enzyme catalyses isopentenyl diphosphate = dimethylallyl diphosphate. Involved in the biosynthesis of isoprenoids. Catalyzes the 1,3-allylic rearrangement of the homoallylic substrate isopentenyl (IPP) to its allylic isomer, dimethylallyl diphosphate (DMAPP). In Methanothrix thermoacetophila (strain DSM 6194 / JCM 14653 / NBRC 101360 / PT) (Methanosaeta thermophila), this protein is Isopentenyl-diphosphate delta-isomerase.